Here is a 176-residue protein sequence, read N- to C-terminus: Translation initiation factor IF-3 (176 aa).

The protein belongs to the IF-3 family. In terms of assembly, monomer.

It is found in the cytoplasm. Functionally, IF-3 binds to the 30S ribosomal subunit and shifts the equilibrium between 70S ribosomes and their 50S and 30S subunits in favor of the free subunits, thus enhancing the availability of 30S subunits on which protein synthesis initiation begins. This is Translation initiation factor IF-3 from Streptococcus agalactiae serotype Ia (strain ATCC 27591 / A909 / CDC SS700).